A 258-amino-acid polypeptide reads, in one-letter code: NAD-capped RNA hydrolase NudC (258 aa).

Residue Arg69 coordinates substrate. Residues Cys98 and Cys101 each contribute to the Zn(2+) site. Substrate is bound at residue Glu111. Zn(2+)-binding residues include Cys116 and Cys119. A substrate-binding site is contributed by Tyr124. The region spanning 125 to 248 is the Nudix hydrolase domain; that stretch reads PQIAPCIIVA…TVARRLIEDT (124 aa). Residues Ala158, Glu174, and Glu178 each contribute to the a divalent metal cation site. Residues 159–180 carry the Nudix box motif; sequence GFVEVGETLEQTVAREVMEESG. 192–199 contacts substrate; it reads QPWPFPMS. A divalent metal cation is bound at residue Glu219. A substrate-binding site is contributed by Ala241.

It belongs to the Nudix hydrolase family. NudC subfamily. In terms of assembly, homodimer. Requires Mg(2+) as cofactor. It depends on Mn(2+) as a cofactor. Zn(2+) is required as a cofactor.

The catalysed reaction is a 5'-end NAD(+)-phospho-ribonucleoside in mRNA + H2O = a 5'-end phospho-adenosine-phospho-ribonucleoside in mRNA + beta-nicotinamide D-ribonucleotide + 2 H(+). The enzyme catalyses NAD(+) + H2O = beta-nicotinamide D-ribonucleotide + AMP + 2 H(+). It catalyses the reaction NADH + H2O = reduced beta-nicotinamide D-ribonucleotide + AMP + 2 H(+). In terms of biological role, mRNA decapping enzyme that specifically removes the nicotinamide adenine dinucleotide (NAD) cap from a subset of mRNAs by hydrolyzing the diphosphate linkage to produce nicotinamide mononucleotide (NMN) and 5' monophosphate mRNA. The NAD-cap is present at the 5'-end of some mRNAs and stabilizes RNA against 5'-processing. Has preference for mRNAs with a 5'-end purine. Catalyzes the hydrolysis of a broad range of dinucleotide pyrophosphates. In Enterobacter sp. (strain 638), this protein is NAD-capped RNA hydrolase NudC.